Consider the following 179-residue polypeptide: MLMGSIARRYARALFSLAVEQGRVEPWNDALQVLKNAVEGSPDLRDVLSNPVYSKEQRRAIVEKLASALKLEREPANLLFLLGDRNRLAYLAAVVDTFRSLADQHLGRLRARVTSAVPLDASAAQAIADRLSKATNAKVLLDRAVDPSLLGGVIAQVGSLVYDGSVRTQLEDLRKTLKQ.

The protein belongs to the ATPase delta chain family. In terms of assembly, F-type ATPases have 2 components, F(1) - the catalytic core - and F(0) - the membrane proton channel. F(1) has five subunits: alpha(3), beta(3), gamma(1), delta(1), epsilon(1). F(0) has three main subunits: a(1), b(2) and c(10-14). The alpha and beta chains form an alternating ring which encloses part of the gamma chain. F(1) is attached to F(0) by a central stalk formed by the gamma and epsilon chains, while a peripheral stalk is formed by the delta and b chains.

The protein localises to the cell inner membrane. In terms of biological role, f(1)F(0) ATP synthase produces ATP from ADP in the presence of a proton or sodium gradient. F-type ATPases consist of two structural domains, F(1) containing the extramembraneous catalytic core and F(0) containing the membrane proton channel, linked together by a central stalk and a peripheral stalk. During catalysis, ATP synthesis in the catalytic domain of F(1) is coupled via a rotary mechanism of the central stalk subunits to proton translocation. Its function is as follows. This protein is part of the stalk that links CF(0) to CF(1). It either transmits conformational changes from CF(0) to CF(1) or is implicated in proton conduction. The protein is ATP synthase subunit delta of Anaeromyxobacter dehalogenans (strain 2CP-1 / ATCC BAA-258).